A 217-amino-acid chain; its full sequence is Large ribosomal subunit protein uL4 (217 aa).

A disordered region spans residues 42–100; it reads RAAARQGTHSTKTRGDVSGGGRKPYRQKGTGRARQGSTRAPQFTGGGVVHGPKPRDYSQ.

It belongs to the universal ribosomal protein uL4 family. In terms of assembly, part of the 50S ribosomal subunit.

In terms of biological role, one of the primary rRNA binding proteins, this protein initially binds near the 5'-end of the 23S rRNA. It is important during the early stages of 50S assembly. It makes multiple contacts with different domains of the 23S rRNA in the assembled 50S subunit and ribosome. Its function is as follows. Forms part of the polypeptide exit tunnel. The protein is Large ribosomal subunit protein uL4 of Mycobacterium avium (strain 104).